The primary structure comprises 407 residues: uncharacterized protein (407 aa).

Disordered regions lie at residues 73–93 (SPHS…VHGG) and 116–202 (SGSI…IKPS). 5 tandem repeats follow at residues 112 to 116 (GSIRS), 117 to 121 (GSIRS), 122 to 126 (GSIRN), 127 to 131 (GSIRS), and 132 to 136 (GSVRD). Residues 112–136 (GSIRSGSIRSGSIRNGSIRSGSVRD) are 5 X 5 AA tandem repeats of G-[S]-[IV]-R-[DNS]. Residues 116–132 (SGSIRSGSIRNGSIRSG) show a composition bias toward low complexity. Basic and acidic residues predominate over residues 187–202 (NHYAESEYSEKSIKPS).

This sequence belongs to the asfivirus B407L family.

This is an uncharacterized protein from Ornithodoros (relapsing fever ticks).